Here is a 375-residue protein sequence, read N- to C-terminus: Fructose-1,6-bisphosphate aldolase/phosphatase (375 aa).

Residue aspartate 15 is the Proton acceptor; for FBP phosphatase activity of the active site. Positions 15, 22, 56, and 57 each coordinate Mg(2+). Histidine 22 provides a ligand contact to beta-D-fructose 1,6-bisphosphate. Histidine 22 is a binding site for dihydroxyacetone phosphate. Position 94 (tyrosine 94) interacts with beta-D-fructose 1,6-bisphosphate. Mg(2+) is bound at residue glutamine 98. 107-108 (GN) is a binding site for beta-D-fructose 1,6-bisphosphate. Mg(2+) is bound at residue aspartate 135. Lysine 136 lines the beta-D-fructose 1,6-bisphosphate pocket. Lysine 136 contacts dihydroxyacetone phosphate. The active-site Proton donor/acceptor; for FBP aldolase activity is tyrosine 237. Residues lysine 240, aspartate 241, and aspartate 242 each coordinate Mg(2+). Lysine 240 serves as the catalytic Schiff-base intermediate with DHAP; for FBP aldolase activity. Residues 250 to 251 (QS), arginine 274, aspartate 295, and tyrosine 357 each bind beta-D-fructose 1,6-bisphosphate. Dihydroxyacetone phosphate is bound by residues arginine 274 and aspartate 295.

It belongs to the FBP aldolase/phosphatase family. In terms of assembly, homooctamer; dimer of tetramers. Mg(2+) is required as a cofactor.

It catalyses the reaction beta-D-fructose 1,6-bisphosphate = D-glyceraldehyde 3-phosphate + dihydroxyacetone phosphate. The enzyme catalyses beta-D-fructose 1,6-bisphosphate + H2O = beta-D-fructose 6-phosphate + phosphate. The protein operates within carbohydrate biosynthesis; gluconeogenesis. FBPase activity is inhibited by Ca(2+), ATP, ADP and phosphoenolpyruvate. In terms of biological role, catalyzes two subsequent steps in gluconeogenesis: the aldol condensation of dihydroxyacetone phosphate (DHAP) and glyceraldehyde-3-phosphate (GA3P) to fructose-1,6-bisphosphate (FBP), and the dephosphorylation of FBP to fructose-6-phosphate (F6P). Can also dephosphorylate, with lower activity, other related substrates including fructose-1-phosphate, fructose-6-phosphate, glucose-1-phosphate, glucose-6-phosphate, glycerol-2-phosphate, phosphoenolpyruvate, 5'-AMP, 6'-ADP and 7'-ATP. The protein is Fructose-1,6-bisphosphate aldolase/phosphatase of Thermococcus onnurineus (strain NA1).